The following is a 234-amino-acid chain: UDP-2,3-diacylglucosamine hydrolase (234 aa).

Mn(2+) is bound by residues Asp9, His11, Asp42, Asn80, and His115. 80-81 lines the substrate pocket; the sequence is NR. Residues Asp123, Ser161, Lys165, Lys168, and His196 each coordinate substrate. Mn(2+)-binding residues include His196 and His198.

Belongs to the LpxH family. The cofactor is Mn(2+).

The protein resides in the cell inner membrane. The catalysed reaction is UDP-2-N,3-O-bis[(3R)-3-hydroxytetradecanoyl]-alpha-D-glucosamine + H2O = 2-N,3-O-bis[(3R)-3-hydroxytetradecanoyl]-alpha-D-glucosaminyl 1-phosphate + UMP + 2 H(+). It participates in glycolipid biosynthesis; lipid IV(A) biosynthesis; lipid IV(A) from (3R)-3-hydroxytetradecanoyl-[acyl-carrier-protein] and UDP-N-acetyl-alpha-D-glucosamine: step 4/6. Hydrolyzes the pyrophosphate bond of UDP-2,3-diacylglucosamine to yield 2,3-diacylglucosamine 1-phosphate (lipid X) and UMP by catalyzing the attack of water at the alpha-P atom. Involved in the biosynthesis of lipid A, a phosphorylated glycolipid that anchors the lipopolysaccharide to the outer membrane of the cell. In Histophilus somni (strain 2336) (Haemophilus somnus), this protein is UDP-2,3-diacylglucosamine hydrolase.